The sequence spans 177 residues: Large ribosomal subunit protein uL5m (177 aa).

It belongs to the universal ribosomal protein uL5 family.

The protein resides in the mitochondrion. The sequence is that of Large ribosomal subunit protein uL5m (RPL5) from Acanthamoeba castellanii (Amoeba).